The primary structure comprises 124 residues: Putative transmembrane protein FLJ36131 (124 aa).

Topologically, residues 1–2 are cytoplasmic; the sequence is MY. A helical membrane pass occupies residues 3-23; it reads VSISFLLGLSHLVLCCLLTFI. Over 24–124 the chain is Extracellular; sequence VNFYLPPESI…LLTTTSYSVS (101 aa). N41 is a glycosylation site (N-linked (GlcNAc...) asparagine).

It localises to the membrane. This Homo sapiens (Human) protein is Putative transmembrane protein FLJ36131.